The sequence spans 256 residues: Na(+)-translocating NADH-quinone reductase subunit E (256 aa).

The next 6 membrane-spanning stretches (helical) occupy residues 1-21, 50-70, 83-103, 123-143, 149-169, and 189-209; these read MWLG…AAFI, MSVA…HAFI, LASV…IAAF, GIFL…LFGI, FIPM…AIVI, and MGIS…LTGI. Residues 229–249 show a composition bias toward polar residues; the sequence is ENTTNPLKESSSKHQPSISKA. The interval 229 to 256 is disordered; it reads ENTTNPLKESSSKHQPSISKARTQRRSL.

Belongs to the NqrDE/RnfAE family. In terms of assembly, composed of six subunits; NqrA, NqrB, NqrC, NqrD, NqrE and NqrF.

The protein localises to the cell inner membrane. The catalysed reaction is a ubiquinone + n Na(+)(in) + NADH + H(+) = a ubiquinol + n Na(+)(out) + NAD(+). NQR complex catalyzes the reduction of ubiquinone-1 to ubiquinol by two successive reactions, coupled with the transport of Na(+) ions from the cytoplasm to the periplasm. NqrA to NqrE are probably involved in the second step, the conversion of ubisemiquinone to ubiquinol. The protein is Na(+)-translocating NADH-quinone reductase subunit E of Chlamydia pneumoniae (Chlamydophila pneumoniae).